The sequence spans 228 residues: MGQKVHPNGIRLGIVKEHTSVWYADRKNYADYLFADLKVREYLQDKLKSASVSRIDIHRPAQTARITIHTARPGIVIGKKGEDVEKLRQDLTKQMGVPVHINIEEIRKPELDAMLVAQSVAQQLERRVMFRRAMKRAVQNAMRIGAKGIKIQVSGRLGGAEIARTEWYREGRVPLHTLRADIDYATYEAHTTYGVIGVKVWIFKGEVIGGRQEELKPVAPAPRKKAAR.

Residues 39-107 (VREYLQDKLK…PVHINIEEIR (69 aa)) enclose the KH type-2 domain.

It belongs to the universal ribosomal protein uS3 family. In terms of assembly, part of the 30S ribosomal subunit. Forms a tight complex with proteins S10 and S14.

Functionally, binds the lower part of the 30S subunit head. Binds mRNA in the 70S ribosome, positioning it for translation. The protein is Small ribosomal subunit protein uS3 of Pseudomonas aeruginosa (strain UCBPP-PA14).